The primary structure comprises 226 residues: Leucyl/phenylalanyl-tRNA--protein transferase (226 aa).

It belongs to the L/F-transferase family.

It localises to the cytoplasm. It catalyses the reaction N-terminal L-lysyl-[protein] + L-leucyl-tRNA(Leu) = N-terminal L-leucyl-L-lysyl-[protein] + tRNA(Leu) + H(+). It carries out the reaction N-terminal L-arginyl-[protein] + L-leucyl-tRNA(Leu) = N-terminal L-leucyl-L-arginyl-[protein] + tRNA(Leu) + H(+). The enzyme catalyses L-phenylalanyl-tRNA(Phe) + an N-terminal L-alpha-aminoacyl-[protein] = an N-terminal L-phenylalanyl-L-alpha-aminoacyl-[protein] + tRNA(Phe). In terms of biological role, functions in the N-end rule pathway of protein degradation where it conjugates Leu, Phe and, less efficiently, Met from aminoacyl-tRNAs to the N-termini of proteins containing an N-terminal arginine or lysine. This Salinibacter ruber (strain DSM 13855 / M31) protein is Leucyl/phenylalanyl-tRNA--protein transferase.